The chain runs to 545 residues: Probable sucrose-6-phosphate hydrolase (545 aa).

Residues 107–110, Gln126, 169–170, 230–231, and Glu285 contribute to the substrate site; these read LLND, FS, and RD. Asp110 is an active-site residue.

The protein belongs to the glycosyl hydrolase 32 family.

It localises to the cytoplasm. The catalysed reaction is Hydrolysis of terminal non-reducing beta-D-fructofuranoside residues in beta-D-fructofuranosides.. Its pathway is glycan biosynthesis; sucrose metabolism. Its function is as follows. Enables the bacterium to metabolize sucrose as a sole carbon source. This Psychromonas ingrahamii (strain DSM 17664 / CCUG 51855 / 37) protein is Probable sucrose-6-phosphate hydrolase.